A 121-amino-acid chain; its full sequence is Non-specific lipid-transfer protein 3 (121 aa).

Positions 1-28 (MAGARRTMALVALVAVVAAAVVAERASA) are cleaved as a signal peptide. 4 disulfide bridges follow: Cys-32–Cys-80, Cys-42–Cys-57, Cys-58–Cys-103, and Cys-78–Cys-117.

The protein belongs to the plant LTP family.

Its function is as follows. Plant non-specific lipid-transfer proteins transfer phospholipids as well as galactolipids across membranes. May play a role in wax or cutin deposition in the cell walls of expanding epidermal cells and certain secretory tissues. May possess an antifungal activity and protect the plant against pathogens. The polypeptide is Non-specific lipid-transfer protein 3 (LTP110-A) (Oryza sativa subsp. indica (Rice)).